Consider the following 190-residue polypeptide: Cytoplasmic envelopment protein 3 (190 aa).

The N-myristoyl glycine; by host moiety is linked to residue glycine 2. The tract at residues 14–190 is disordered; the sequence is GTTSGEPLKD…TKKPAASLPF (177 aa). Residues 30-43 show a composition bias toward polar residues; the sequence is SLRSYDNIPPTSSS. A compositionally biased stretch (acidic residues) spans 44 to 58; the sequence is DEGEDDDDGEDDDNE. A compositionally biased stretch (basic and acidic residues) spans 80-90; sequence SHREATHDGPK. Residues 108–123 are compositionally biased toward basic residues; sequence KQSKKKKKPSKHHHHQ. Residues 130–139 show a composition bias toward acidic residues; the sequence is ETDDLDEEDT.

This sequence belongs to the herpesviridae cytoplasmic envelopment protein 3 family. Interacts with cytoplasmic envelopment protein 2; this interaction is essential for the proper localization of each protein to the assembly complex and thus for the production of infectious virus. Myristoylation and palmitoylation (probably on one or more of the nearby cysteines at the N-terminus) enable membrane-binding and Golgi apparatus-specific targeting and are essential for efficient packaging. In terms of processing, phosphorylated. Phosphorylation does not seem to be required for recycling to the host Golgi apparatus. Packaging is selective for underphosphorylated forms.

It localises to the virion tegument. Its subcellular location is the virion membrane. The protein localises to the host cell membrane. It is found in the host Golgi apparatus membrane. Its function is as follows. Plays an important role in the cytoplasmic envelopment of tegument proteins and capsids during the assembly and egress processes. Also participates in viral entry at the fusion step probably by regulating the core fusion machinery. This chain is Cytoplasmic envelopment protein 3 (UL99), found in Human cytomegalovirus (strain Merlin) (HHV-5).